Here is a 214-residue protein sequence, read N- to C-terminus: Adenylate kinase (214 aa).

Gly10–Thr15 is an ATP binding site. Residues Ser30 to Val59 are NMP. AMP is bound by residues Thr31, Arg36, His57–Val59, Gly85–Arg88, and Gln92. The interval Gly126 to Asp163 is LID. An ATP-binding site is contributed by Arg127. Zn(2+) contacts are provided by Cys130 and Cys133. Residue Ser136–Tyr137 coordinates ATP. Zn(2+)-binding residues include Cys150 and Asp153. AMP contacts are provided by Arg160 and Arg171. Position 199 (Gln199) interacts with ATP.

It belongs to the adenylate kinase family. As to quaternary structure, monomer.

It localises to the cytoplasm. It carries out the reaction AMP + ATP = 2 ADP. It functions in the pathway purine metabolism; AMP biosynthesis via salvage pathway; AMP from ADP: step 1/1. Functionally, catalyzes the reversible transfer of the terminal phosphate group between ATP and AMP. Plays an important role in cellular energy homeostasis and in adenine nucleotide metabolism. The sequence is that of Adenylate kinase from Brevibacillus brevis (strain 47 / JCM 6285 / NBRC 100599).